Consider the following 215-residue polypeptide: Peroxiredoxin (215 aa).

A Thioredoxin domain is found at 6–161 (PLIGEEFPRV…ILRAVKALQT (156 aa)). Catalysis depends on cysteine 48, which acts as the Cysteine sulfenic acid (-SOH) intermediate. Arginine 124 serves as a coordination point for substrate. A disulfide bridge links cysteine 205 with cysteine 211.

Belongs to the peroxiredoxin family. Prx6 subfamily. As to quaternary structure, homodecamer. Pentamer of dimers that assemble into a ring structure.

It is found in the cytoplasm. It carries out the reaction a hydroperoxide + [thioredoxin]-dithiol = an alcohol + [thioredoxin]-disulfide + H2O. Its function is as follows. Thiol-specific peroxidase that catalyzes the reduction of hydrogen peroxide and organic hydroperoxides to water and alcohols, respectively. Plays a role in cell protection against oxidative stress by detoxifying peroxides. This is Peroxiredoxin from Thermotoga maritima (strain ATCC 43589 / DSM 3109 / JCM 10099 / NBRC 100826 / MSB8).